We begin with the raw amino-acid sequence, 351 residues long: Nicotinate-nucleotide--dimethylbenzimidazole phosphoribosyltransferase (351 aa).

Catalysis depends on Glu-317, which acts as the Proton acceptor.

This sequence belongs to the CobT family.

The enzyme catalyses 5,6-dimethylbenzimidazole + nicotinate beta-D-ribonucleotide = alpha-ribazole 5'-phosphate + nicotinate + H(+). The protein operates within nucleoside biosynthesis; alpha-ribazole biosynthesis; alpha-ribazole from 5,6-dimethylbenzimidazole: step 1/2. Its function is as follows. Catalyzes the synthesis of alpha-ribazole-5'-phosphate from nicotinate mononucleotide (NAMN) and 5,6-dimethylbenzimidazole (DMB). The chain is Nicotinate-nucleotide--dimethylbenzimidazole phosphoribosyltransferase from Pseudomonas fluorescens (strain ATCC BAA-477 / NRRL B-23932 / Pf-5).